Consider the following 203-residue polypeptide: Glycerol-3-phosphate acyltransferase (203 aa).

A run of 4 helical transmembrane segments spans residues 4 to 24 (MAVT…AVLI), 80 to 100 (PVLL…PLFF), 117 to 137 (PIGL…AILF), and 139 to 159 (YSSL…WMIK).

It belongs to the PlsY family. In terms of assembly, probably interacts with PlsX.

It is found in the cell inner membrane. The enzyme catalyses an acyl phosphate + sn-glycerol 3-phosphate = a 1-acyl-sn-glycero-3-phosphate + phosphate. Its pathway is lipid metabolism; phospholipid metabolism. In terms of biological role, catalyzes the transfer of an acyl group from acyl-phosphate (acyl-PO(4)) to glycerol-3-phosphate (G3P) to form lysophosphatidic acid (LPA). This enzyme utilizes acyl-phosphate as fatty acyl donor, but not acyl-CoA or acyl-ACP. This chain is Glycerol-3-phosphate acyltransferase, found in Vibrio vulnificus (strain YJ016).